Consider the following 1028-residue polypeptide: Formate dehydrogenase major subunit (1028 aa).

The segment at residues 1–33 (MQVSRRKFFKICAGGMAGTSAAMLGFAPANVLA) is a signal peptide (tat-type signal). Residues 43-114 (AFESRNTCTY…GSLDYVNSES (72 aa)) enclose the 4Fe-4S Mo/W bis-MGD-type domain. [4Fe-4S] cluster contacts are provided by Cys-50, Cys-53, Cys-57, and Cys-100. Sec-204 is a non-standard amino acid (selenocysteine).

Belongs to the prokaryotic molybdopterin-containing oxidoreductase family. As to quaternary structure, formate dehydrogenase is a membrane-bound complex, formed by subunits alpha, beta and gamma. Mo-bis(molybdopterin guanine dinucleotide) serves as cofactor. [4Fe-4S] cluster is required as a cofactor. Post-translationally, predicted to be exported by the Tat system. The position of the signal peptide cleavage has not been experimentally proven.

The protein resides in the periplasm. It carries out the reaction formate + NAD(+) = CO2 + NADH. Allows to use formate as major electron donor during anaerobic respiration. Subunit alpha possibly forms the active site. The chain is Formate dehydrogenase major subunit (fdxG) from Haemophilus influenzae (strain ATCC 51907 / DSM 11121 / KW20 / Rd).